Consider the following 301-residue polypeptide: 2-dehydropantoate 2-reductase (301 aa).

NADP(+) is bound by residues 11–16 (GAGAMG), Asn107, and Ala133. Asn107 lines the substrate pocket. Catalysis depends on Lys187, which acts as the Proton donor. Residues Asn191, Asn195, Asn205, and Ser251 each coordinate substrate. Residue Glu263 coordinates NADP(+).

The protein belongs to the ketopantoate reductase family.

It is found in the cytoplasm. The enzyme catalyses (R)-pantoate + NADP(+) = 2-dehydropantoate + NADPH + H(+). Its pathway is cofactor biosynthesis; (R)-pantothenate biosynthesis; (R)-pantoate from 3-methyl-2-oxobutanoate: step 2/2. Functionally, catalyzes the NADPH-dependent reduction of ketopantoate into pantoic acid. The polypeptide is 2-dehydropantoate 2-reductase (Listeria innocua serovar 6a (strain ATCC BAA-680 / CLIP 11262)).